Consider the following 296-residue polypeptide: Peroxidase P7 (296 aa).

Pyrrolidone carboxylic acid is present on Gln-1. 4 cysteine pairs are disulfide-bonded: Cys-11–Cys-91, Cys-44–Cys-49, Cys-97–Cys-292, and Cys-176–Cys-201. Residue His-42 is the Proton acceptor of the active site. Asp-43, Val-46, Gly-48, Asp-50, and Ser-52 together coordinate Ca(2+). Pro-139 contributes to the substrate binding site. His-169 contributes to the heme b binding site. Residue Thr-170 coordinates Ca(2+). N-linked (GlcNAc...) asparagine glycosylation occurs at Asn-185. Ca(2+) is bound by residues Asp-216, Ser-219, and Asp-224.

This sequence belongs to the peroxidase family. Classical plant (class III) peroxidase subfamily. It depends on Ca(2+) as a cofactor. Heme b is required as a cofactor.

It carries out the reaction 2 a phenolic donor + H2O2 = 2 a phenolic radical donor + 2 H2O. In terms of biological role, removal of H(2)O(2), oxidation of toxic reductants, biosynthesis and degradation of lignin, suberization, auxin catabolism, response to environmental stresses such as wounding, pathogen attack and oxidative stress. These functions might be dependent on each isozyme/isoform in each plant tissue. In Brassica rapa subsp. rapa (Turnip), this protein is Peroxidase P7.